Consider the following 176-residue polypeptide: Cytochrome b (176 aa).

The next 3 helical transmembrane spans lie at 33 to 53 (FGSL…FLAM), 77 to 98 (WILR…YLHV), and 113 to 133 (WNIG…GYVL). 2 residues coordinate heme b: His83 and His97.

Belongs to the cytochrome b family. As to quaternary structure, the cytochrome bc1 complex contains 11 subunits: 3 respiratory subunits (MT-CYB, CYC1 and UQCRFS1), 2 core proteins (UQCRC1 and UQCRC2) and 6 low-molecular weight proteins (UQCRH/QCR6, UQCRB/QCR7, UQCRQ/QCR8, UQCR10/QCR9, UQCR11/QCR10 and a cleavage product of UQCRFS1). This cytochrome bc1 complex then forms a dimer. The cofactor is heme b.

The protein resides in the mitochondrion inner membrane. Its function is as follows. Component of the ubiquinol-cytochrome c reductase complex (complex III or cytochrome b-c1 complex) that is part of the mitochondrial respiratory chain. The b-c1 complex mediates electron transfer from ubiquinol to cytochrome c. Contributes to the generation of a proton gradient across the mitochondrial membrane that is then used for ATP synthesis. This Myotis leibii (Eastern small-footed myotis) protein is Cytochrome b (MT-CYB).